A 157-amino-acid chain; its full sequence is MARRKRVYRKIERRDPRYDSALVGKLISKVMLDGKRSLAERIVYAAIDMANEGTDSIDPLEVITRAIENAKPRVEVKSRRVGGATYQVPLEVDPARSESLAMRWIVNYARNRKGVPMHKALANEIKEAANNQGSSVRKRDDVHKMAQANRAFAHFRW.

This sequence belongs to the universal ribosomal protein uS7 family. Part of the 30S ribosomal subunit. Contacts proteins S9 and S11.

One of the primary rRNA binding proteins, it binds directly to 16S rRNA where it nucleates assembly of the head domain of the 30S subunit. Is located at the subunit interface close to the decoding center, probably blocks exit of the E-site tRNA. The sequence is that of Small ribosomal subunit protein uS7 from Akkermansia muciniphila (strain ATCC BAA-835 / DSM 22959 / JCM 33894 / BCRC 81048 / CCUG 64013 / CIP 107961 / Muc).